Consider the following 345-residue polypeptide: Trace amine-associated receptor 6 (345 aa).

At 1 to 32 (MGSNSSPPAVLQLCYENVNGSCVKTPYSPGPR) the chain is on the extracellular side. An N-linked (GlcNAc...) asparagine glycan is attached at N19. Intrachain disulfides connect C22-C186 and C105-C190. The chain crosses the membrane as a helical span at residues 33–53 (VLLYAVFGFGAVLAVFGNLLV). Over 54–68 (MISILHFKQLHSPTN) the chain is Cytoplasmic. The helical transmembrane segment at 69 to 89 (FLIASLACADFWVGVSVMPFS) threads the bilayer. The Extracellular segment spans residues 90-107 (MVRSIESCWYFGRSFCTF). A helical membrane pass occupies residues 108–128 (HTCCDVAFCYSSLFHLSFISI). The Cytoplasmic segment spans residues 129–147 (DRYIAVTDPLVYPTKFTVS). The chain crosses the membrane as a helical span at residues 148 to 168 (VSGICISISWILPLAYSGAVF). At 169-202 (YTGVYADGLEEVSDAVNCVGGCQVVVNQNWVLID) the chain is on the extracellular side. The chain crosses the membrane as a helical span at residues 203-223 (FLSFLIPTLVMIILYGNIFLV). Residues 224–259 (ARQQAKKIETVGNKAESSSESYKARVARRERKAAKT) are Cytoplasmic-facing. A helical membrane pass occupies residues 260–276 (LGITVVAFMISWLPYSI). The Extracellular portion of the chain corresponds to 277-282 (DSLVDA). A helical transmembrane segment spans residues 283-302 (FMGFITPAYIYEICVWCAYY). Residues 303-345 (NSAMNPLIYALFYPWFKKAIKVIMSGQVFKNSSATMNLFSEQI) are Cytoplasmic-facing.

It belongs to the G-protein coupled receptor 1 family.

It localises to the cell membrane. Its function is as follows. Olfactory receptor specific for trace amines, such as beta-phenylethylamine (beta-PEA). Trace amine compounds are enriched in animal body fluids and act on trace amine-associated receptors (TAARs) to elicit both intraspecific and interspecific innate behaviors. Beta-PEA-binding causes a conformation change that triggers signaling via G(s)-class of G alpha proteins (GNAL or GNAS). This is Trace amine-associated receptor 6 (Taar6) from Rattus norvegicus (Rat).